The primary structure comprises 318 residues: tRNA dimethylallyltransferase (318 aa).

Position 16–23 (16–23 (GPTASGKT)) interacts with ATP. Position 18–23 (18–23 (TASGKT)) interacts with substrate. 4 interaction with substrate tRNA regions span residues 41-44 (DSAL), 165-169 (QRINR), 246-251 (RCVGYR), and 279-286 (KRQITWLR).

It belongs to the IPP transferase family. As to quaternary structure, monomer. Mg(2+) serves as cofactor.

The catalysed reaction is adenosine(37) in tRNA + dimethylallyl diphosphate = N(6)-dimethylallyladenosine(37) in tRNA + diphosphate. In terms of biological role, catalyzes the transfer of a dimethylallyl group onto the adenine at position 37 in tRNAs that read codons beginning with uridine, leading to the formation of N6-(dimethylallyl)adenosine (i(6)A). In Actinobacillus succinogenes (strain ATCC 55618 / DSM 22257 / CCUG 43843 / 130Z), this protein is tRNA dimethylallyltransferase.